The following is a 220-amino-acid chain: ATP-dependent Clp protease proteolytic subunit (220 aa).

The active-site Nucleophile is the S125. Residue H150 is part of the active site.

This sequence belongs to the peptidase S14 family. In terms of assembly, fourteen ClpP subunits assemble into 2 heptameric rings which stack back to back to give a disk-like structure with a central cavity, resembling the structure of eukaryotic proteasomes.

It is found in the cytoplasm. It carries out the reaction Hydrolysis of proteins to small peptides in the presence of ATP and magnesium. alpha-casein is the usual test substrate. In the absence of ATP, only oligopeptides shorter than five residues are hydrolyzed (such as succinyl-Leu-Tyr-|-NHMec, and Leu-Tyr-Leu-|-Tyr-Trp, in which cleavage of the -Tyr-|-Leu- and -Tyr-|-Trp bonds also occurs).. Cleaves peptides in various proteins in a process that requires ATP hydrolysis. Has a chymotrypsin-like activity. Plays a major role in the degradation of misfolded proteins. In Bacteroides fragilis (strain YCH46), this protein is ATP-dependent Clp protease proteolytic subunit.